Reading from the N-terminus, the 44-residue chain is Peptide Hact-4 (44 aa).

Intrachain disulfides connect Cys8–Cys42, Cys15–Cys34, and Cys20–Cys43.

As to expression, expressed in tentacles.

Its subcellular location is the nematocyst. It is found in the secreted. Functionally, peptide with unknown function. Does not exhibit antimicrobial activity against Escherichia coli and Staphylococcus aureus. Does not exhibit any effect on human ion channel TRPV1 in a Xenopus laevis oocytes assay. The sequence is that of Peptide Hact-4 from Heliofungia actiniformis (Mushroom coral).